The sequence spans 409 residues: Putative competence-damage inducible protein (409 aa).

This sequence belongs to the CinA family.

The protein is Putative competence-damage inducible protein of Clostridium botulinum (strain Okra / Type B1).